Reading from the N-terminus, the 362-residue chain is 3-dehydroquinate synthase (362 aa).

Residues 72–77 (DGEQYK), 106–110 (GVVGD), 130–131 (TT), Lys-143, Lys-152, and 170–173 (CLKT) contribute to the NAD(+) site. The Zn(2+) site is built by Glu-185, His-248, and His-265.

This sequence belongs to the sugar phosphate cyclases superfamily. Dehydroquinate synthase family. Co(2+) is required as a cofactor. Zn(2+) serves as cofactor. The cofactor is NAD(+).

The protein localises to the cytoplasm. It carries out the reaction 7-phospho-2-dehydro-3-deoxy-D-arabino-heptonate = 3-dehydroquinate + phosphate. Its pathway is metabolic intermediate biosynthesis; chorismate biosynthesis; chorismate from D-erythrose 4-phosphate and phosphoenolpyruvate: step 2/7. Its function is as follows. Catalyzes the conversion of 3-deoxy-D-arabino-heptulosonate 7-phosphate (DAHP) to dehydroquinate (DHQ). The protein is 3-dehydroquinate synthase of Aliivibrio fischeri (strain ATCC 700601 / ES114) (Vibrio fischeri).